The sequence spans 247 residues: NAD-dependent protein deacetylase 2 (247 aa).

The region spanning 1 to 247 (MDQIRQLAQW…ASVRKQIQAE (247 aa)) is the Deacetylase sirtuin-type domain. Residues Ala23, Thr27, Phe34, Arg35, Gln103, Ile105, Asp106, and His121 each contribute to the NAD(+) site. A nicotinamide-binding site is contributed by Phe34. 2 residues coordinate nicotinamide: Ile105 and Asp106. The active-site Proton acceptor is the His121. The Zn(2+) site is built by Cys129, Cys132, Cys149, and Cys152. The NAD(+) site is built by Thr188, Ser189, Asn215, and Ile233.

This sequence belongs to the sirtuin family. Class U subfamily. The cofactor is Zn(2+).

It localises to the cytoplasm. The catalysed reaction is N(6)-acetyl-L-lysyl-[protein] + NAD(+) + H2O = 2''-O-acetyl-ADP-D-ribose + nicotinamide + L-lysyl-[protein]. NAD-dependent protein deacetylase which modulates the activities of several enzymes which are inactive in their acetylated form. The protein is NAD-dependent protein deacetylase 2 of Geobacillus kaustophilus (strain HTA426).